Consider the following 421-residue polypeptide: Outer capsid protein P8 (421 aa).

This sequence belongs to the phytoreovirus outer capsid protein P8 family. In terms of assembly, homotrimer. Homomultimer. Interacts with host peroxisomal glycolate oxidase (GOX). This interaction mediates its relocation to virus factories peripheral to host peroxisomes.

Its subcellular location is the virion. It is found in the host cytoplasm. Functionally, capsid protein which self-assembles to form the outer icosahedral capsid with a T=13 symmetry, about 70 nm in diameter and consisting of 780 molecules capsid proteins. This is Outer capsid protein P8 (S8) from Rice dwarf virus (isolate S) (RDV).